The sequence spans 74 residues: O-conotoxin GeXXXIA (74 aa).

An N-terminal signal peptide occupies residues 1 to 22 (MKLTCVLIITVLFLTACQLTTA). Positions 23-33 (VTYSRGEHKHR) are excised as a propeptide.

This sequence belongs to the conotoxin O1 superfamily. Homodimer; disulfide-linked. In terms of processing, may contain 2 intrachain disulfide bonds and probably one interchain disulfide bond forming the homodimer. Post-translationally, the disulfide pairing is not important for activity towards the different nAChR subtypes, since this peptide without disulfide bond or with different disulfide bonds shows the same activity. In terms of tissue distribution, expressed by the venom duct.

The protein localises to the secreted. Functionally, the activity of this natural homodimer has not been tested due to low abundance. The synthetic linear peptide has been refolded, giving 4 different monomeric isomers (m1 to m4) with 2 disulfide bonds each. All isomers potently inhibit rat alpha-1-beta-1-delta-epsilon/CHRNA1-CHRNB1-CHRND-CHRNE and human alpha-9-alpha-10/CHRNA9-CHRNA10 nicotinic acetylcholine receptors (nAChR). In addition, they show a modest inhibition at human alpha-3-beta-2/CHRNA3-CHRNB2, alpha-3-beta-4/CHRNA3-CHRNB4, alpha-7/CHRNA7, and alpha-4-beta-4/CHRNA4-CHRNB4. The synthetic monomer peptide without disulfide bonds shows a potent activity on alpha-9-alpha-10/CHRNA9 and CHRNA10 (IC(50)=16.2 nM). This linear peptide does not act as a competitive antagonist, or as a channel pore blocker of nAChR. This Conus generalis (General cone) protein is O-conotoxin GeXXXIA.